Here is a 663-residue protein sequence, read N- to C-terminus: Epithelial sodium channel subunit gamma-2 (663 aa).

The Cytoplasmic segment spans residues 1-55 (MSNSGKKLTQKLKKNLPVTGPQAPTLYELMQWYCLNTNTHGCRRIVVSKGRLRRW). A helical membrane pass occupies residues 56 to 76 (IWIVLTLIAVALIFWQCALLL). Over 77-544 (MTYYSVSASI…GGQLGLWMSC (468 aa)) the chain is Extracellular. 8 cysteine pairs are disulfide-bonded: Cys101-Cys286, Cys209-Cys217, Cys263-Cys270, Cys375-Cys460, Cys397-Cys456, Cys401-Cys452, Cys410-Cys437, and Cys412-Cys426. Residues 545-565 (SMVCGLEIVEVFFIDSFWVIL) form a helical membrane-spanning segment. Over 566–663 (RQKWHKLCNW…IDSDEDVERF (98 aa)) the chain is Cytoplasmic.

Belongs to the amiloride-sensitive sodium channel (TC 1.A.6) family. SCNN1G subfamily. As to quaternary structure, component of the heterotrimeric epithelial sodium channel (ENaC) composed of an alpha/SCNN1A, a beta/SCNN1B and a gamma/SCNN1G subunit.

Its subcellular location is the apical cell membrane. It catalyses the reaction Na(+)(in) = Na(+)(out). Originally identified and characterized by its inhibition by the diuretic drug amiloride. Functionally, this is one of the three pore-forming subunits of the heterotrimeric epithelial sodium channel (ENaC), a critical regulator of sodium balance and fluid homeostasis. ENaC operates in epithelial tissues, where it mediates the electrodiffusion of sodium ions from extracellular fluid through the apical membrane of cells, with water following osmotically. This Xenopus laevis (African clawed frog) protein is Epithelial sodium channel subunit gamma-2 (scnn1g-b).